The sequence spans 394 residues: GTPase Obg (394 aa).

In terms of domain architecture, Obg spans 5-163 (SNFVDYVKIY…RMVIMQLKML (159 aa)). The interval 26–45 (HFRREKYIPKGGPDGGDGGR) is disordered. One can recognise an OBG-type G domain in the interval 164–330 (ADVGLVGFPN…LKDTLWKELS (167 aa)). GTP-binding positions include 170–177 (GFPNAGKS), 195–199 (FTTLE), 217–220 (DIPG), 284–287 (TKCD), and 311–313 (SAV). Residues Ser-177 and Thr-197 each contribute to the Mg(2+) site.

This sequence belongs to the TRAFAC class OBG-HflX-like GTPase superfamily. OBG GTPase family. As to quaternary structure, monomer. Mg(2+) serves as cofactor.

The protein localises to the cytoplasm. Functionally, an essential GTPase which binds GTP, GDP and possibly (p)ppGpp with moderate affinity, with high nucleotide exchange rates and a fairly low GTP hydrolysis rate. Plays a role in control of the cell cycle, stress response, ribosome biogenesis and in those bacteria that undergo differentiation, in morphogenesis control. This is GTPase Obg from Porphyromonas gingivalis (strain ATCC 33277 / DSM 20709 / CIP 103683 / JCM 12257 / NCTC 11834 / 2561).